Reading from the N-terminus, the 386-residue chain is Putative 8-amino-7-oxononanoate synthase (386 aa).

Arg26 lines the substrate pocket. Gly113–Tyr114 contributes to the pyridoxal 5'-phosphate binding site. His138 provides a ligand contact to substrate. Pyridoxal 5'-phosphate contacts are provided by residues Ser186, Asp211–His214, and Thr240–Lys243. Lys243 bears the N6-(pyridoxal phosphate)lysine mark. Thr352 is a binding site for substrate.

Belongs to the class-II pyridoxal-phosphate-dependent aminotransferase family. BioF subfamily. Homodimer. Requires pyridoxal 5'-phosphate as cofactor.

The catalysed reaction is 6-carboxyhexanoyl-[ACP] + L-alanine + H(+) = (8S)-8-amino-7-oxononanoate + holo-[ACP] + CO2. It functions in the pathway cofactor biosynthesis; biotin biosynthesis. Catalyzes the decarboxylative condensation of pimeloyl-[acyl-carrier protein] and L-alanine to produce 8-amino-7-oxononanoate (AON), [acyl-carrier protein], and carbon dioxide. In Phenylobacterium zucineum (strain HLK1), this protein is Putative 8-amino-7-oxononanoate synthase (bioF).